A 950-amino-acid polypeptide reads, in one-letter code: MKLSELFNPNEFAARHLSFGDEAALLAAVGEKSMDEFVGNTVPQSIRMPSELDLPDALTEADALAKLKGIASKNVINKSYIGLGYYPTRVPNVILRNVLENPGWYTAYTPYQAEIAQGRLEALLNFQQVCIDLTGFPVAGASLLDEATAAAEAMAMAHRVGKVKSERFFVDARVYPQTLDVMKTRAKYFGFELVVSDFAKADDGEYFGALFQYVGKDGDVQDLQDVIGRLKAKGTIVAVAADIMSLVLLKSPAELGADIALGNTQRFGVPMGFGGPHAAYFAFKDAFKRSAPGRIIGVSKDASGKPALRMALSTREQHIRREKATSNICTAQALLANLAGMYAVYHGPEGVKRIANRIHALASAFADALVSDGINVVHKVFFDTVTVDFGNKEKADQVFAAALESGYNLRRVNDTQVAAAFHETSACEDLVDLYRAFTGKDTFAFADDVKGRLNAELLRQDDILQHPVFNRYHTEHEMLRYLKKLEDRDLAMNRSMISLGSCTMKLNATAEMLPITWAEFSDIHPYAPEAQTAGYRELLADMENSLKSITGFDAISFQPNSGAQGEYSGMLAIRRYQEAQGEAQRNICLIPKSAHGTNPATAAMLGLKVVVVDTDEHGNVNIDDLKAKAEQHRDALSAIMITYPSTHGVYEEGIRDICRIVHENGGQVYMDGANLNAQIGIMQPAEVGADVLHMNLHKTFCIPHGGGGPGMGPIGLKAHLAPFAPGHALTDTHSASADQTAVAAAAFGSASILPITWMYLTMMGKQGMEQATRWALLNANYVAKRLSEDYPILYTGKNGRVAHECIVDLRPLKAESGITETDIAKRLMDYGFHAPTVSFPVAGTLMIEPTESESKAELDRFIAALKQIKQEVLKVGRGEWPKEDNPLVNAPHTASDVTGEWAHPYSREEAVFPLPFVREHKFWPSVNRVDDVYGDRNLVCSCPPMENYED.

Residue Lys698 is modified to N6-(pyridoxal phosphate)lysine.

It belongs to the GcvP family. The glycine cleavage system is composed of four proteins: P, T, L and H. Pyridoxal 5'-phosphate is required as a cofactor.

The enzyme catalyses N(6)-[(R)-lipoyl]-L-lysyl-[glycine-cleavage complex H protein] + glycine + H(+) = N(6)-[(R)-S(8)-aminomethyldihydrolipoyl]-L-lysyl-[glycine-cleavage complex H protein] + CO2. Functionally, the glycine cleavage system catalyzes the degradation of glycine. The P protein binds the alpha-amino group of glycine through its pyridoxal phosphate cofactor; CO(2) is released and the remaining methylamine moiety is then transferred to the lipoamide cofactor of the H protein. This chain is Glycine dehydrogenase (decarboxylating), found in Neisseria meningitidis serogroup C / serotype 2a (strain ATCC 700532 / DSM 15464 / FAM18).